A 194-amino-acid polypeptide reads, in one-letter code: Fe/S biogenesis protein NfuA (194 aa).

Residues Cys-151 and Cys-154 each contribute to the [4Fe-4S] cluster site.

This sequence belongs to the NfuA family. As to quaternary structure, homodimer. Requires [4Fe-4S] cluster as cofactor.

Its function is as follows. Involved in iron-sulfur cluster biogenesis. Binds a 4Fe-4S cluster, can transfer this cluster to apoproteins, and thereby intervenes in the maturation of Fe/S proteins. Could also act as a scaffold/chaperone for damaged Fe/S proteins. This Aliivibrio salmonicida (strain LFI1238) (Vibrio salmonicida (strain LFI1238)) protein is Fe/S biogenesis protein NfuA.